We begin with the raw amino-acid sequence, 367 residues long: Probable sugar phosphate/phosphate translocator At1g48230 (367 aa).

Transmembrane regions (helical) follow at residues leucine 9–tyrosine 29, leucine 43–isoleucine 63, phenylalanine 76–phenylalanine 96, valine 106–valine 126, methionine 140–isoleucine 160, valine 163–leucine 183, valine 193–valine 213, tryptophan 229–isoleucine 249, isoleucine 257–phenylalanine 276, and threonine 280–isoleucine 302. Over residues isoleucine 321–serine 330 the composition is skewed to basic and acidic residues. Positions isoleucine 321–leucine 341 are disordered.

It belongs to the TPT transporter family. TPT (TC 2.A.7.9) subfamily.

It is found in the membrane. This is Probable sugar phosphate/phosphate translocator At1g48230 from Arabidopsis thaliana (Mouse-ear cress).